Consider the following 630-residue polypeptide: tRNA uridine 5-carboxymethylaminomethyl modification enzyme MnmG (630 aa).

Position 14 to 19 (14 to 19) interacts with FAD; that stretch reads GGGHAG. Residue 282-296 participates in NAD(+) binding; it reads GTRYCPSIEDKVRKF.

Belongs to the MnmG family. In terms of assembly, homodimer. Heterotetramer of two MnmE and two MnmG subunits. FAD serves as cofactor.

It is found in the cytoplasm. Functionally, NAD-binding protein involved in the addition of a carboxymethylaminomethyl (cmnm) group at the wobble position (U34) of certain tRNAs, forming tRNA-cmnm(5)s(2)U34. The chain is tRNA uridine 5-carboxymethylaminomethyl modification enzyme MnmG from Treponema pallidum (strain Nichols).